A 320-amino-acid polypeptide reads, in one-letter code: Polyadenylate-binding protein-interacting protein 13 (320 aa).

The disordered stretch occupies residues 1–44 (MAVAENVGVKVDSSNNQNIDNNTTSLVETKPSCSDDQTPKSKSS). Over residues 12–44 (DSSNNQNIDNNTTSLVETKPSCSDDQTPKSKSS) the composition is skewed to polar residues. A PAM2-like motif is present at residues 65–75 (HLNPMAKEFVP). 2 RRM domains span residues 137–212 (RTVY…MSKT) and 234–310 (KTVY…PSKT).

This Arabidopsis thaliana (Mouse-ear cress) protein is Polyadenylate-binding protein-interacting protein 13 (CID13).